Reading from the N-terminus, the 198-residue chain is MYVGRFLLAGKLEDGTPIAVYGVCSRSFSDRRIEVREGAAFVVPEDPSYITENPYVTYTCARIVDEFLVLTNGAQTDPIADKLESGVPPREALVSVTFAMDYEHDEYNTPRISLITDGETFWLGRVAPEEVYFRVMKPKDGEGYLLSVYGEYAEVPSKPNMTLDREDPLECDPVPSFEHYVCSVIARHDGGRWSLEAR.

It belongs to the archaeal IMP cyclohydrolase family.

It catalyses the reaction IMP + H2O = 5-formamido-1-(5-phospho-D-ribosyl)imidazole-4-carboxamide. The protein operates within purine metabolism; IMP biosynthesis via de novo pathway; IMP from 5-formamido-1-(5-phospho-D-ribosyl)imidazole-4-carboxamide: step 1/1. In terms of biological role, catalyzes the cyclization of 5-formylamidoimidazole-4-carboxamide ribonucleotide to IMP. In Methanopyrus kandleri (strain AV19 / DSM 6324 / JCM 9639 / NBRC 100938), this protein is IMP cyclohydrolase.